Here is a 369-residue protein sequence, read N- to C-terminus: Endophilin-A (369 aa).

Residues 18–248 (TEKMGGAEGT…LQEKRAEAES (231 aa)) form the BAR domain. Positions 227–249 (QCADVLRGLQETLQEKRAEAESR) form a coiled coil. The segment covering 275 to 294 (GTPSHISSSASPLPSPMRSP) has biased composition (low complexity). The tract at residues 275-297 (GTPSHISSSASPLPSPMRSPAKS) is disordered. The SH3 domain maps to 305–364 (QQQPCCQALYDFDPENPGELGFKENDIITLLNRVDDNWYEGAVNGRTGYFPQSYVQVQVP).

It belongs to the endophilin family.

It localises to the cytoplasm. It is found in the membrane. Its function is as follows. Required presynaptically at the neuromuscular junction. Implicated in synaptic vesicle endocytosis. The polypeptide is Endophilin-A (Drosophila virilis (Fruit fly)).